The following is a 438-amino-acid chain: Zinc finger protein 641 (438 aa).

The interval 1 to 53 is disordered; it reads MQAEDRSQFGSAAEMLSEQTAALGTGWESMNVQLDGAEPQVERGSQEERPWRT. Residues 17–32 are compositionally biased toward polar residues; that stretch reads SEQTAALGTGWESMNV. A compositionally biased stretch (basic and acidic residues) spans 40–51; sequence QVERGSQEERPW. The 73-residue stretch at 109–181 folds into the KRAB domain; sequence VTIKDVSLCF…DPQDLEERDI (73 aa). The segment at 171 to 265 is transactivation; it reads PDPQDLEERD…EMDSLLRPHT (95 aa). The residue at position 191 (Ser191) is a Phosphoserine. 3 C2H2-type zinc fingers span residues 264-286, 292-314, and 320-342; these read HTCP…QQTH, YSCL…QKTH, and SRCS…QRVH. The tract at residues 345–367 is disordered; sequence GKSCKGQEVGESPGTRKRQRAPP. C2H2-type zinc fingers lie at residues 372 to 394 and 400 to 422; these read HVCT…WLTH and FQCP…LLTH. The segment at 418–438 is disordered; sequence HLLTHQGQSPRNSWDRGTSVF. Residues 422–438 show a composition bias toward polar residues; the sequence is HQGQSPRNSWDRGTSVF. Ser426 carries the phosphoserine modification.

Belongs to the krueppel C2H2-type zinc-finger protein family. As to expression, highly expressed in skeletal muscle, moderate expression in heart, liver, and pancreas, lower expression in placenta, no expression seen in brain, lung, and kidney.

It is found in the nucleus. Transcriptional activator. Activates transcriptional activities of SRE and AP-1. The sequence is that of Zinc finger protein 641 (ZNF641) from Homo sapiens (Human).